Consider the following 326-residue polypeptide: Vacuolar protein sorting-associated protein 26A-B (326 aa).

This sequence belongs to the VPS26 family. In terms of assembly, component of the heterotrimeric retromer cargo-selective complex (CSC) which is believed to associate with variable sorting nexins to form functionally distinct retromer complex variants.

It localises to the cytoplasm. Its subcellular location is the endosome membrane. The protein resides in the early endosome. Its function is as follows. Acts as a component of the retromer cargo-selective complex (CSC). The CSC is believed to be the core functional component of retromer or respective retromer complex variants acting to prevent missorting of selected transmembrane cargo proteins into the lysosomal degradation pathway. Retromer mediates retrograde transport of cargo proteins from endosomes to the trans-Golgi network (TGN). This Xenopus laevis (African clawed frog) protein is Vacuolar protein sorting-associated protein 26A-B (vps26a-b).